Here is a 268-residue protein sequence, read N- to C-terminus: Undecaprenyl-diphosphatase (268 aa).

The next 7 membrane-spanning stretches (helical) occupy residues 41–61 (PGPS…VCYF), 89–109 (IFIG…FVPY), 114–134 (IFRS…LMYI), 155–175 (LIGL…GVTI), 191–211 (FSFL…FISS), 218–238 (FSFF…LLAI), and 248–268 (NGLK…LLNL).

Belongs to the UppP family.

The protein localises to the cell inner membrane. It carries out the reaction di-trans,octa-cis-undecaprenyl diphosphate + H2O = di-trans,octa-cis-undecaprenyl phosphate + phosphate + H(+). Catalyzes the dephosphorylation of undecaprenyl diphosphate (UPP). Confers resistance to bacitracin. The protein is Undecaprenyl-diphosphatase of Prochlorococcus marinus (strain MIT 9312).